The chain runs to 502 residues: Maturase K (502 aa).

This sequence belongs to the intron maturase 2 family. MatK subfamily.

Its subcellular location is the plastid. The protein localises to the chloroplast. Its function is as follows. Usually encoded in the trnK tRNA gene intron. Probably assists in splicing its own and other chloroplast group II introns. The sequence is that of Maturase K from Fremontodendron californicum (California flannelbush).